The chain runs to 159 residues: Protransforming growth factor alpha (159 aa).

Residues 1–23 form the signal peptide; sequence MVPAAGQLALLALGILVAVCQAL. Residues 24–38 constitute a propeptide, removed in mature form; that stretch reads ENSTSPLSDSPVAAA. At 24–97 the chain is on the extracellular side; it reads ENSTSPLSDS…AVVAASQKKQ (74 aa). N-linked (GlcNAc...) asparagine glycosylation is present at Asn25. Residues 42–82 enclose the EGF-like domain; the sequence is HFNKCPDSHTQYCFHGTCRFLVQEEKPACVCHSGYVGVRCE. 3 disulfide bridges follow: Cys46–Cys59, Cys54–Cys70, and Cys72–Cys81. A propeptide spans 89 to 159 (removed in mature form); it reads VVAASQKKQA…TACCHSETVV (71 aa). The helical transmembrane segment at 98–123 threads the bilayer; sequence AITALVVVSIVALAVLIITCVLIHCC. The Cytoplasmic portion of the chain corresponds to 124-159; that stretch reads QVRKHCEWCRALVCRHEKPSALLKGRTACCHSETVV. Residues Cys152 and Cys153 are each lipidated (S-palmitoyl cysteine).

As to quaternary structure, interacts with the PDZ domains of MAGI3, SDCBP and SNTA1. The interaction with SDCBP, is required for the targeting to the cell surface. In the endoplasmic reticulum, in its immature form (i.e. with a prosegment and lacking full N-glycosylation), interacts with CNIH. In the Golgi apparatus, may form a complex with CNIH and GORASP2. Interacts (via cytoplasmic C-terminal domain) with NKD2.

Its subcellular location is the secreted. It localises to the extracellular space. It is found in the cell membrane. Its function is as follows. TGF alpha is a mitogenic polypeptide that is able to bind to the EGF receptor/EGFR and to act synergistically with TGF beta to promote anchorage-independent cell proliferation in soft agar. The sequence is that of Protransforming growth factor alpha (Tgfa) from Rattus norvegicus (Rat).